Here is a 160-residue protein sequence, read N- to C-terminus: Major pollen allergen Bet v 1-C (160 aa).

Brassinolide is bound by residues Lys55, Tyr82, Tyr84, and Asn101.

This sequence belongs to the BetVI family.

It localises to the cytoplasm. May be a general steroid carrier protein. The protein is Major pollen allergen Bet v 1-C (BETV1C) of Betula pendula (European white birch).